A 276-amino-acid polypeptide reads, in one-letter code: Protein SCO1 homolog 2, mitochondrial (276 aa).

The transit peptide at 1–14 directs the protein to the mitochondrion; sequence MLPCRRLVLSCKNQ. The chain crosses the membrane as a helical span at residues 66–82; sequence YAVPAILLGFAGFVGFL. Residues 110–273 form the Thioredoxin domain; sequence VKGPIIGGPF…SQELLKEVAS (164 aa).

This sequence belongs to the SCO1/2 family. As to expression, expressed in the whole plant with highest expression in imbibed seeds and embryos, and the root hair zone.

Its subcellular location is the mitochondrion inner membrane. Thought to play a role in cellular copper homeostasis, mitochondrial redox signaling or insertion of copper into the active site of COX. Participates in copper and redox homeostasis. The polypeptide is Protein SCO1 homolog 2, mitochondrial (HCC2) (Arabidopsis thaliana (Mouse-ear cress)).